Consider the following 1214-residue polypeptide: BOS complex subunit NOMO1 (1214 aa).

The signal sequence occupies residues 1–23 (MRAGRCAAALLLLLLSGAGRAIG). Residues 24 to 1150 (SEDIVVGCGG…RKLPEQDIAQ (1127 aa)) lie on the Extracellular side of the membrane. N-linked (GlcNAc...) asparagine glycosylation is found at N42, N210, and N610. A coiled-coil region spans residues 692–720 (KSAQELRREQQLAEIETRRQEREKNGKEE). The span at 708–726 (TRRQEREKNGKEEGEEGRA) shows a compositional bias: basic and acidic residues. A disordered region spans residues 708-733 (TRRQEREKNGKEEGEEGRARPPGQEM). Residues 1151 to 1167 (GSYIALPLTLLLLLAGY) traverse the membrane as a helical segment. Residues 1168–1214 (NHDKLIPLLLQLTSRLQGVRALGQAASDSSGPEDMKRQTKKQKTRRT) are Cytoplasmic-facing. Residues 1190–1214 (GQAASDSSGPEDMKRQTKKQKTRRT) are disordered. Residues S1196 and S1197 each carry the phosphoserine modification. Residues 1205 to 1214 (QTKKQKTRRT) are compositionally biased toward basic residues.

As to quaternary structure, component of the back of Sec61 (BOS) complex, composed of NCLN/Nicalin, NOMO (NOMO1, NOMO2 or NOMO3) and TMEM147. The BOS complex is part of the multi-pass translocon (MPT) complex, composed of three subcomplexes, the GEL complex (composed of RAB5IF/OPTI and TMCO1), the BOS complex (composed of NCLN/Nicalin, NOMO and TMEM147) and the PAT complex (composed of WDR83OS/Asterix and CCDC47). The MPT complex associates with the SEC61 complex.

The protein resides in the endoplasmic reticulum membrane. Its function is as follows. Component of the multi-pass translocon (MPT) complex that mediates insertion of multi-pass membrane proteins into the lipid bilayer of membranes. The MPT complex takes over after the SEC61 complex: following membrane insertion of the first few transmembrane segments of proteins by the SEC61 complex, the MPT complex occludes the lateral gate of the SEC61 complex to promote insertion of subsequent transmembrane regions. The protein is BOS complex subunit NOMO1 of Mus musculus (Mouse).